The chain runs to 247 residues: Probable transcriptional regulatory protein lpp1249 (247 aa).

It belongs to the TACO1 family.

The protein localises to the cytoplasm. The sequence is that of Probable transcriptional regulatory protein lpp1249 from Legionella pneumophila (strain Paris).